A 200-amino-acid polypeptide reads, in one-letter code: Probable molybdenum cofactor guanylyltransferase (200 aa).

Residues 9-11 (LAG), Lys-21, Asp-69, and Asp-100 contribute to the GTP site. A Mg(2+)-binding site is contributed by Asp-100.

This sequence belongs to the MobA family. It depends on Mg(2+) as a cofactor.

Its subcellular location is the cytoplasm. It carries out the reaction Mo-molybdopterin + GTP + H(+) = Mo-molybdopterin guanine dinucleotide + diphosphate. Its function is as follows. Transfers a GMP moiety from GTP to Mo-molybdopterin (Mo-MPT) cofactor (Moco or molybdenum cofactor) to form Mo-molybdopterin guanine dinucleotide (Mo-MGD) cofactor. This is Probable molybdenum cofactor guanylyltransferase from Bacillus thuringiensis (strain Al Hakam).